A 309-amino-acid chain; its full sequence is tRNA pseudouridine synthase B (309 aa).

Asp51 (nucleophile) is an active-site residue.

The protein belongs to the pseudouridine synthase TruB family. Type 1 subfamily.

It catalyses the reaction uridine(55) in tRNA = pseudouridine(55) in tRNA. Responsible for synthesis of pseudouridine from uracil-55 in the psi GC loop of transfer RNAs. The chain is tRNA pseudouridine synthase B from Coxiella burnetii (strain RSA 493 / Nine Mile phase I).